The primary structure comprises 261 residues: Glucose 1-dehydrogenase 1 (261 aa).

NADP(+) is bound at residue 11–35 (VITGSSTGLGKAMAIRFATEKAKVV). Ser-145 provides a ligand contact to substrate. The active-site Proton acceptor is Tyr-158.

It belongs to the short-chain dehydrogenases/reductases (SDR) family. In terms of assembly, homotetramer.

The catalysed reaction is D-glucose + NAD(+) = D-glucono-1,5-lactone + NADH + H(+). It carries out the reaction D-glucose + NADP(+) = D-glucono-1,5-lactone + NADPH + H(+). Functionally, may play some role in spore germination. The sequence is that of Glucose 1-dehydrogenase 1 (gdhI) from Priestia megaterium (Bacillus megaterium).